Consider the following 401-residue polypeptide: Dual-specificity RNA methyltransferase RlmN (401 aa).

Glu114 serves as the catalytic Proton acceptor. One can recognise a Radical SAM core domain in the interval 120–365 (DKGRGTLCVS…TMVRRTRGDD (246 aa)). An intrachain disulfide couples Cys127 to Cys370. Cys134, Cys138, and Cys141 together coordinate [4Fe-4S] cluster. S-adenosyl-L-methionine contacts are provided by residues 187–188 (GE), Ser219, 241–243 (SLH), and Asn327. Cys370 serves as the catalytic S-methylcysteine intermediate.

The protein belongs to the radical SAM superfamily. RlmN family. The cofactor is [4Fe-4S] cluster.

The protein localises to the cytoplasm. The catalysed reaction is adenosine(2503) in 23S rRNA + 2 reduced [2Fe-2S]-[ferredoxin] + 2 S-adenosyl-L-methionine = 2-methyladenosine(2503) in 23S rRNA + 5'-deoxyadenosine + L-methionine + 2 oxidized [2Fe-2S]-[ferredoxin] + S-adenosyl-L-homocysteine. It carries out the reaction adenosine(37) in tRNA + 2 reduced [2Fe-2S]-[ferredoxin] + 2 S-adenosyl-L-methionine = 2-methyladenosine(37) in tRNA + 5'-deoxyadenosine + L-methionine + 2 oxidized [2Fe-2S]-[ferredoxin] + S-adenosyl-L-homocysteine. In terms of biological role, specifically methylates position 2 of adenine 2503 in 23S rRNA and position 2 of adenine 37 in tRNAs. m2A2503 modification seems to play a crucial role in the proofreading step occurring at the peptidyl transferase center and thus would serve to optimize ribosomal fidelity. The polypeptide is Dual-specificity RNA methyltransferase RlmN (Xanthomonas campestris pv. campestris (strain 8004)).